A 262-amino-acid polypeptide reads, in one-letter code: Probable aminoglycoside 3'-phosphotransferase (262 aa).

Asp-187 (proton acceptor) is an active-site residue.

This sequence belongs to the aminoglycoside phosphotransferase family.

The enzyme catalyses kanamycin A + ATP = kanamycin 3'-phosphate + ADP + H(+). This chain is Probable aminoglycoside 3'-phosphotransferase (ymdC), found in Lactococcus lactis subsp. lactis (strain IL1403) (Streptococcus lactis).